Consider the following 421-residue polypeptide: eIF5-mimic protein 1 (421 aa).

The disordered stretch occupies residues Met-1–Lys-24. The W2 domain maps to Thr-250 to Glu-417.

This sequence belongs to the BZW family.

It is found in the cytoplasm. Its function is as follows. Translation initiation regulator which may repress non-AUG initiated translation and repeat-associated non-AUG (RAN) initiated translation by acting as a competitive inhibitor of eukaryotic translation initiation factor 5 (EIF5) function. This Danio rerio (Zebrafish) protein is eIF5-mimic protein 1 (bzw2).